The chain runs to 498 residues: UPF0371 protein cauri_2449 (498 aa).

The protein belongs to the UPF0371 family.

This Corynebacterium aurimucosum (strain ATCC 700975 / DSM 44827 / CIP 107346 / CN-1) (Corynebacterium nigricans) protein is UPF0371 protein cauri_2449.